The sequence spans 106 residues: Large ribosomal subunit protein uL23 (106 aa).

It belongs to the universal ribosomal protein uL23 family. As to quaternary structure, part of the 50S ribosomal subunit. Contacts protein L29, and trigger factor when it is bound to the ribosome.

In terms of biological role, one of the early assembly proteins it binds 23S rRNA. One of the proteins that surrounds the polypeptide exit tunnel on the outside of the ribosome. Forms the main docking site for trigger factor binding to the ribosome. This is Large ribosomal subunit protein uL23 from Neisseria meningitidis serogroup A / serotype 4A (strain DSM 15465 / Z2491).